The chain runs to 25 residues: Cytochrome c oxidase polypeptide VIIc (25 aa).

The disordered stretch occupies residues Ser1–Met25.

The protein belongs to the cytochrome c oxidase VIIc family. In terms of assembly, component of the cytochrome c oxidase (complex IV, CIV), a multisubunit enzyme composed of 14 subunits. The complex is composed of a catalytic core of 3 subunits MT-CO1, MT-CO2 and MT-CO3, encoded in the mitochondrial DNA, and 11 supernumerary subunits COX4I, COX5A, COX5B, COX6A, COX6B, COX6C, COX7A, COX7B, COX7C, COX8 and NDUFA4, which are encoded in the nuclear genome. The complex exists as a monomer or a dimer and forms supercomplexes (SCs) in the inner mitochondrial membrane with NADH-ubiquinone oxidoreductase (complex I, CI) and ubiquinol-cytochrome c oxidoreductase (cytochrome b-c1 complex, complex III, CIII), resulting in different assemblies (supercomplex SCI(1)III(2)IV(1) and megacomplex MCI(2)III(2)IV(2)). Interacts with RAB5IF.

Its subcellular location is the mitochondrion inner membrane. It functions in the pathway energy metabolism; oxidative phosphorylation. Its function is as follows. Component of the cytochrome c oxidase, the last enzyme in the mitochondrial electron transport chain which drives oxidative phosphorylation. The respiratory chain contains 3 multisubunit complexes succinate dehydrogenase (complex II, CII), ubiquinol-cytochrome c oxidoreductase (cytochrome b-c1 complex, complex III, CIII) and cytochrome c oxidase (complex IV, CIV), that cooperate to transfer electrons derived from NADH and succinate to molecular oxygen, creating an electrochemical gradient over the inner membrane that drives transmembrane transport and the ATP synthase. Cytochrome c oxidase is the component of the respiratory chain that catalyzes the reduction of oxygen to water. Electrons originating from reduced cytochrome c in the intermembrane space (IMS) are transferred via the dinuclear copper A center (CU(A)) of subunit 2 and heme A of subunit 1 to the active site in subunit 1, a binuclear center (BNC) formed by heme A3 and copper B (CU(B)). The BNC reduces molecular oxygen to 2 water molecules using 4 electrons from cytochrome c in the IMS and 4 protons from the mitochondrial matrix. The chain is Cytochrome c oxidase polypeptide VIIc from Oncorhynchus mykiss (Rainbow trout).